The sequence spans 348 residues: Dihydroorotase (348 aa).

2 residues coordinate Zn(2+): His17 and His19. Residues 19–21 (HLR) and Asn45 contribute to the substrate site. 3 residues coordinate Zn(2+): Lys103, His140, and His178. Lys103 carries the N6-carboxylysine modification. His140 serves as a coordination point for substrate. Leu223 provides a ligand contact to substrate. Asp251 contributes to the Zn(2+) binding site. Asp251 is an active-site residue. His255 and Ala267 together coordinate substrate.

It belongs to the metallo-dependent hydrolases superfamily. DHOase family. Class II DHOase subfamily. In terms of assembly, homodimer. Zn(2+) serves as cofactor.

The catalysed reaction is (S)-dihydroorotate + H2O = N-carbamoyl-L-aspartate + H(+). It participates in pyrimidine metabolism; UMP biosynthesis via de novo pathway; (S)-dihydroorotate from bicarbonate: step 3/3. Catalyzes the reversible cyclization of carbamoyl aspartate to dihydroorotate. This Yersinia enterocolitica serotype O:8 / biotype 1B (strain NCTC 13174 / 8081) protein is Dihydroorotase.